The primary structure comprises 1451 residues: Dual 3',5'-cyclic-AMP and -GMP phosphodiesterase 11 (1451 aa).

Disordered regions lie at residues 1–54 (MGQA…PQIQ), 75–100 (ATTPLQFQPTGRMNTEQGGTGYGGYG), 125–169 (LPAH…QVQQ), 235–262 (GNDVVSSTSPTHANGQTSSSRGGSGATT), and 327–374 (QHHH…GSGG). Positions 11–21 (RGCRYKNKNKS) are enriched in basic residues. A compositionally biased stretch (low complexity) spans 24–45 (QQQQQQQQQQQQQQQHQQQQQQ). Polar residues predominate over residues 77 to 91 (TPLQFQPTGRMNTEQ). Low complexity-rich tracts occupy residues 135-147 (SGAAPPSSSNGSS) and 160-169 (QQQQQYQVQQ). Over residues 235-248 (GNDVVSSTSPTHAN) the composition is skewed to polar residues. Positions 327-340 (QHHHNHAHLHHSQH) are enriched in basic residues. A compositionally biased stretch (low complexity) spans 341-355 (SHYQAGGAVGSSSLG). A compositionally biased stretch (gly residues) spans 356–374 (STGGASGAGGAPSLGGSGG). GAF domains lie at 419-572 (EVRT…GIGL) and 604-754 (TIEH…GMGI). Positions 783-1107 (ATMDEAHRLR…GHWIDLADVV (325 aa)) constitute a PDEase domain. His860 (proton donor) is an active-site residue. A divalent metal cation-binding residues include His864, His900, Asp901, and Asp1011. 4 disordered regions span residues 1109 to 1171 (TKTS…SNTN), 1200 to 1248 (DEQA…TPVS), 1268 to 1305 (QTSNQAQTQKQRCKSCDHSRSGLQVRKTSSLRGAQELD), and 1325 to 1364 (INNHSHHHNHSHSHNHNHHHHHHHHSHHNHSQHGIGIGSA). Low complexity-rich tracts occupy residues 1142–1171 (ASEAEVAVDSPSEKASVNGSNVANNSSNTN) and 1218–1234 (CRSNSTCSSSTASSCLS). Residues 1268-1277 (QTSNQAQTQK) are compositionally biased toward polar residues. Residues 1328-1355 (HSHHHNHSHSHNHNHHHHHHHHSHHNHS) show a composition bias toward basic residues.

This sequence belongs to the cyclic nucleotide phosphodiesterase family. A divalent metal cation is required as a cofactor. As to expression, in adults, it is enriched in Malpighian tubules.

It catalyses the reaction 3',5'-cyclic GMP + H2O = GMP + H(+). The catalysed reaction is 3',5'-cyclic AMP + H2O = AMP + H(+). Plays a role in signal transduction by regulating the intracellular concentration of cyclic nucleotides cAMP and cGMP. Dual-specificity phosphodiesterase that catalyzes the hydrolysis of both cAMP and cGMP to 5'-AMP and 5'-GMP, respectively. This is Dual 3',5'-cyclic-AMP and -GMP phosphodiesterase 11 (Pde11) from Drosophila melanogaster (Fruit fly).